Reading from the N-terminus, the 607-residue chain is LRR receptor kinase SERK2 (607 aa).

A signal peptide spans 1 to 21; sequence MRELRVAVLIIAVSLPSFSAS. Topologically, residues 22–219 are extracellular; it reads DRQGDALYDM…QSGSHSSKIG (198 aa). N-linked (GlcNAc...) asparagine glycosylation is found at N36 and N110. LRR repeat units follow at residues 87–110, 111–135, 136–159, and 160–183; these read LKYLTVLSLAGNRISGGIPEQFGN, LSSLTSLDLEDNLLVGEIPASLGQL, SKLQLLILSDNNFNGSIPDSLAKI, and SSLTDIRLAYNNLSGQIPGPLFQV. N-linked (GlcNAc...) asparagine glycans are attached at residues N149, N171, N187, and N206. The helical transmembrane segment at 220 to 240 threads the bilayer; it reads IVLGTVGGVIGLLIVAALFLF. At 241–607 the chain is on the cytoplasmic side; that stretch reads CKGRRKSHLR…QEAIELSGGR (367 aa). In terms of domain architecture, Protein kinase spans 284–563; it reads FSERNVLGQG…VVRMLEGEGL (280 aa). ATP contacts are provided by residues 290 to 298 and K312; that span reads LGQGGFGKV. The active-site Proton acceptor is the D411.

The protein belongs to the protein kinase superfamily. Ser/Thr protein kinase family.

The protein localises to the cell membrane. It carries out the reaction L-seryl-[protein] + ATP = O-phospho-L-seryl-[protein] + ADP + H(+). The enzyme catalyses L-threonyl-[protein] + ATP = O-phospho-L-threonyl-[protein] + ADP + H(+). In terms of biological role, may be involved in the regulation of plant growth through the brassinosteroid (BR) signaling pathway. This is LRR receptor kinase SERK2 from Oryza sativa subsp. japonica (Rice).